Reading from the N-terminus, the 571-residue chain is Streptolysin O (571 aa).

The first 33 residues, 1–33 (MSNKKTFKKYSRVAGLLTVALIIGNLVTANAES), serve as a signal peptide directing secretion. 2 disordered regions span residues 32 to 56 (ESNK…ESSE) and 81 to 108 (KEMP…HTEE). Over residues 37–48 (NTASTETTTTNE) the composition is skewed to low complexity. The next 4 beta stranded transmembrane spans lie at 260–273 (KSQI…NSKI), 280–289 (IDFKSISKGE), 358–367 (SNDVEAAFSA), and 375–387 (KTNG…LENS). The Conserved undecapeptide signature appears at 529 to 539 (ECTGLAWEWWR). Residue Thr-561 is a short sequence motif, cholesterol binding.

Belongs to the cholesterol-dependent cytolysin family. In terms of assembly, homooligomeric pore complex of 35 to 50 subunits; when inserted in the host membrane.

Its subcellular location is the secreted. The protein localises to the host cell membrane. A cholesterol-dependent toxin that causes cytolysis by forming pores in cholesterol containing host membranes. After binding to target membranes, the protein undergoes a major conformation change, leading to its insertion in the host membrane and formation of an oligomeric pore complex. Cholesterol is required for binding to host membranes, membrane insertion and pore formation; cholesterol binding is mediated by a Thr-Leu pair in the C-terminus. Can be reversibly inactivated by oxidation. The chain is Streptolysin O (slo) from Streptococcus pyogenes serotype M6 (strain ATCC BAA-946 / MGAS10394).